Reading from the N-terminus, the 501-residue chain is Lysine--tRNA ligase (501 aa).

Mg(2+) is bound by residues glutamate 410 and glutamate 417.

It belongs to the class-II aminoacyl-tRNA synthetase family. As to quaternary structure, homodimer. The cofactor is Mg(2+).

It is found in the cytoplasm. The enzyme catalyses tRNA(Lys) + L-lysine + ATP = L-lysyl-tRNA(Lys) + AMP + diphosphate. The protein is Lysine--tRNA ligase of Shewanella halifaxensis (strain HAW-EB4).